Reading from the N-terminus, the 187-residue chain is Peptide methionine sulfoxide reductase A2-1 (187 aa).

This sequence belongs to the MsrA Met sulfoxide reductase family.

The protein resides in the cytoplasm. Its subcellular location is the cytosol. It carries out the reaction L-methionyl-[protein] + [thioredoxin]-disulfide + H2O = L-methionyl-(S)-S-oxide-[protein] + [thioredoxin]-dithiol. The enzyme catalyses [thioredoxin]-disulfide + L-methionine + H2O = L-methionine (S)-S-oxide + [thioredoxin]-dithiol. In terms of biological role, catalyzes the reduction of methionine sulfoxide (MetSO) to methionine in proteins. Plays a protective role against oxidative stress by restoring activity to proteins that have been inactivated by methionine oxidation. MSRA family specifically reduces the MetSO S-enantiomer. The chain is Peptide methionine sulfoxide reductase A2-1 (MSRA2-1) from Oryza sativa subsp. japonica (Rice).